Reading from the N-terminus, the 605-residue chain is Glucose oxidase (605 aa).

A signal peptide spans 1-16 (MQTLLVSSLVVSLAAA). FAD-binding residues include Leu-51 and Thr-52. Residue Asn-65 is glycosylated (N-linked (GlcNAc...) asparagine). Glu-72 is an FAD binding site. Residue Asn-111 is glycosylated (N-linked (GlcNAc...) asparagine). Residues Ser-125, Asn-129, Gly-130, and Thr-132 each coordinate FAD. 2 N-linked (GlcNAc...) asparagine glycosylation sites follow: Asn-183 and Asn-190. Cys-186 and Cys-228 form a disulfide bridge. Val-272 is an FAD binding site. Asn-280, Asn-377, Asn-410, and Asn-495 each carry an N-linked (GlcNAc...) asparagine glycan. His-538 acts as the Proton acceptor in catalysis. The O2 site is built by Arg-559 and Val-560. Residues Gly-571 and Met-583 each coordinate FAD.

The protein belongs to the GMC oxidoreductase family. In terms of assembly, homodimer. FAD serves as cofactor. The N-linked sugar chains of the glucose oxidase contributed to the high solubility of the enzyme in water.

It is found in the secreted. Its subcellular location is the cell wall. The protein resides in the cytoplasm. It localises to the extracellular space. The protein localises to the extracellular matrix. It carries out the reaction beta-D-glucose + O2 = D-glucono-1,5-lactone + H2O2. Glucose oxidase catalyzes the oxidation of beta-D-glucose to D-glucono-delta-lactone and hydrogen peroxide in the presence of molecular oxygen. D-glucono-delta-lactone is sequentially hydrolyzed by lactonase to D-gluconic acid, and the resulting hydrogen peroxide is hydrolyzed by catalase to oxygen and water. The activity shows high specificity to beta-D-glucose, with very low to no activity towards L-glucose, 2-deoxy-D-glucose, 3-deoxy-D-glucose, 4-deoxy-D-glucose, 5-deoxy-D-glucose, 6-deoxy-D-glucose, 3-O-methyl-D-glucose, 4-O-methyl-D-glucose, 6-O-methyl-D-glucose, 4,6-O-benzylidene-D-glucose, 5-thio-5-deoxy-D-glucose, D-mannose, D-allose, D-galactose, D-fructose, D-arabinose, D-xylose, trehalose, melibiose, L-mannomethylose, lactose, sucrose or 1,5-anhydro-D-glucitol. This Aspergillus niger protein is Glucose oxidase.